Reading from the N-terminus, the 667-residue chain is DNA ligase (667 aa).

NAD(+) is bound by residues 32 to 36 (DSVYD), 81 to 82 (SL), and Glu111. The N6-AMP-lysine intermediate role is filled by Lys113. Residues Arg134, Glu168, Lys285, and Lys309 each contribute to the NAD(+) site. 4 residues coordinate Zn(2+): Cys403, Cys406, Cys421, and Cys426. Residues 588 to 667 (VGDNPFAGKT…DNLIEQLNLI (80 aa)) form the BRCT domain.

Belongs to the NAD-dependent DNA ligase family. LigA subfamily. Mg(2+) is required as a cofactor. Mn(2+) serves as cofactor.

The enzyme catalyses NAD(+) + (deoxyribonucleotide)n-3'-hydroxyl + 5'-phospho-(deoxyribonucleotide)m = (deoxyribonucleotide)n+m + AMP + beta-nicotinamide D-nucleotide.. DNA ligase that catalyzes the formation of phosphodiester linkages between 5'-phosphoryl and 3'-hydroxyl groups in double-stranded DNA using NAD as a coenzyme and as the energy source for the reaction. It is essential for DNA replication and repair of damaged DNA. The polypeptide is DNA ligase (Lysinibacillus sphaericus (strain C3-41)).